A 334-amino-acid chain; its full sequence is Holliday junction branch migration complex subunit RuvB (334 aa).

A large ATPase domain (RuvB-L) region spans residues Met-1–Tyr-179. Residues Leu-18, Arg-19, Gly-60, Lys-63, Thr-64, Ser-65, Glu-126–Phe-128, Arg-169, Tyr-179, and Arg-216 contribute to the ATP site. Residue Thr-64 coordinates Mg(2+). Residues Thr-180–Leu-250 are small ATPAse domain (RuvB-S). The interval Asn-253–Glu-334 is head domain (RuvB-H). The DNA site is built by Arg-308 and Arg-313.

It belongs to the RuvB family. Homohexamer. Forms an RuvA(8)-RuvB(12)-Holliday junction (HJ) complex. HJ DNA is sandwiched between 2 RuvA tetramers; dsDNA enters through RuvA and exits via RuvB. An RuvB hexamer assembles on each DNA strand where it exits the tetramer. Each RuvB hexamer is contacted by two RuvA subunits (via domain III) on 2 adjacent RuvB subunits; this complex drives branch migration. In the full resolvosome a probable DNA-RuvA(4)-RuvB(12)-RuvC(2) complex forms which resolves the HJ.

It is found in the cytoplasm. The enzyme catalyses ATP + H2O = ADP + phosphate + H(+). Functionally, the RuvA-RuvB-RuvC complex processes Holliday junction (HJ) DNA during genetic recombination and DNA repair, while the RuvA-RuvB complex plays an important role in the rescue of blocked DNA replication forks via replication fork reversal (RFR). RuvA specifically binds to HJ cruciform DNA, conferring on it an open structure. The RuvB hexamer acts as an ATP-dependent pump, pulling dsDNA into and through the RuvAB complex. RuvB forms 2 homohexamers on either side of HJ DNA bound by 1 or 2 RuvA tetramers; 4 subunits per hexamer contact DNA at a time. Coordinated motions by a converter formed by DNA-disengaged RuvB subunits stimulates ATP hydrolysis and nucleotide exchange. Immobilization of the converter enables RuvB to convert the ATP-contained energy into a lever motion, pulling 2 nucleotides of DNA out of the RuvA tetramer per ATP hydrolyzed, thus driving DNA branch migration. The RuvB motors rotate together with the DNA substrate, which together with the progressing nucleotide cycle form the mechanistic basis for DNA recombination by continuous HJ branch migration. Branch migration allows RuvC to scan DNA until it finds its consensus sequence, where it cleaves and resolves cruciform DNA. In Chlamydia trachomatis serovar A (strain ATCC VR-571B / DSM 19440 / HAR-13), this protein is Holliday junction branch migration complex subunit RuvB.